Reading from the N-terminus, the 161-residue chain is Large ribosomal subunit protein uL15 (161 aa).

A disordered region spans residues 1–43; that stretch reads MKLSEISDNPGARKKRMRIGRGIGSGKGKTGGRGGKGQTARSG. The segment covering 21–37 has biased composition (gly residues); the sequence is RGIGSGKGKTGGRGGKG.

The protein belongs to the universal ribosomal protein uL15 family. Part of the 50S ribosomal subunit.

In terms of biological role, binds to the 23S rRNA. The sequence is that of Large ribosomal subunit protein uL15 from Rhodopseudomonas palustris (strain BisB5).